The sequence spans 186 residues: Large ribosomal subunit protein uL22 (186 aa).

It belongs to the universal ribosomal protein uL22 family. Component of the large ribosomal subunit (LSU). Mature N.crassa ribosomes consist of a small (40S) and a large (60S) subunit. The 40S small subunit contains 1 molecule of ribosomal RNA (18S rRNA) and at least 32 different proteins. The large 60S subunit contains 3 rRNA molecules (26S, 5.8S and 5S rRNA) and at least 42 different proteins.

The protein localises to the cytoplasm. Component of the ribosome, a large ribonucleoprotein complex responsible for the synthesis of proteins in the cell. The small ribosomal subunit (SSU) binds messenger RNAs (mRNAs) and translates the encoded message by selecting cognate aminoacyl-transfer RNA (tRNA) molecules. The large subunit (LSU) contains the ribosomal catalytic site termed the peptidyl transferase center (PTC), which catalyzes the formation of peptide bonds, thereby polymerizing the amino acids delivered by tRNAs into a polypeptide chain. The nascent polypeptides leave the ribosome through a tunnel in the LSU and interact with protein factors that function in enzymatic processing, targeting, and the membrane insertion of nascent chains at the exit of the ribosomal tunnel. This Neurospora crassa (strain ATCC 24698 / 74-OR23-1A / CBS 708.71 / DSM 1257 / FGSC 987) protein is Large ribosomal subunit protein uL22 (rpl-17).